Here is a 955-residue protein sequence, read N- to C-terminus: Glutamyl aminopeptidase (955 aa).

The Cytoplasmic portion of the chain corresponds to 1–17; that stretch reads MDIEDKTSKMHCMKGKH. A helical; Signal-anchor for type II membrane protein transmembrane segment spans residues 18–38; it reads VVIICGVVIAVGLILGLGLGL. Residues 39-955 are Extracellular-facing; the sequence is GLDTKACNPP…LENSEHSNFA (917 aa). 2 N-linked (GlcNAc...) asparagine glycosylation sites follow: asparagine 118 and asparagine 192. Glutamate 218 lines the substrate pocket. N-linked (GlcNAc...) asparagine glycans are attached at residues asparagine 319 and asparagine 335. Position 352–356 (352–356) interacts with substrate; it reads GAMEN. Position 388 (histidine 388) interacts with Zn(2+). Residue glutamate 389 is the Proton acceptor of the active site. Zn(2+)-binding residues include histidine 392 and glutamate 411. 8 N-linked (GlcNAc...) asparagine glycosylation sites follow: asparagine 458, asparagine 547, asparagine 584, asparagine 592, asparagine 674, asparagine 759, asparagine 823, and asparagine 836. Arginine 882 lines the substrate pocket.

It belongs to the peptidase M1 family. In terms of assembly, homodimer; disulfide-linked. It depends on Zn(2+) as a cofactor. Post-translationally, N-glycosylated. Glycosylation counts for an increased mass of about 32% of the protein mass (about 48 kDa).

The protein localises to the cell membrane. It carries out the reaction Release of N-terminal glutamate (and to a lesser extent aspartate) from a peptide.. With respect to regulation, substrate specificity is modulated by calcium which enhances the enzymatic activity for cleavage of acidic residues while reducing its activity with neutral and basic residues. Hydrolytic activity is inhibited by the aminopeptidase inhibitor (Leu and acidic inhibitor) amastatin, but not by bestatin (aminopeptidase inhibitor Leu inhibitor), leupeptin, pepstatin A and PMSF. Its hydrolytic activity is also strongly reduced by zinc ions, with a complete inhibition at 0.5 mM, and moderately inhibited by cobalt and copper ions. In terms of biological role, venom protein that cleaves N-terminal acidic residues from peptides with high potency in presence of calcium. It may have several roles in venom including alteration of blood pressure by cleaving circulating angiotensin-2, general degradation of host tissue, increase of permeability to other venom components, and/or processing of other toxins in the venom. In Bitis rhinoceros (West African gaboon viper), this protein is Glutamyl aminopeptidase.